The chain runs to 143 residues: Oxoglutarate dehydrogenase inhibitor (143 aa).

At Thr-14 the chain carries Phosphothreonine. Positions 68 to 117 (TTAGRHPESDIFLDDVTVSRRHAEFRINEGEFEVVDVGSLNGTYVNREPR) constitute an FHA domain.

The protein resides in the cytoplasm. Its function is as follows. An essential component of the PknG signaling pathway. When unphosphorylated, it inhibits the activity of 2-oxoglutarate dehydrogenase. When phosphorylated it does not inhibit 2-oxoglutarate dehydrogenase. The sequence is that of Oxoglutarate dehydrogenase inhibitor (odhI) from Corynebacterium glutamicum (strain ATCC 13032 / DSM 20300 / JCM 1318 / BCRC 11384 / CCUG 27702 / LMG 3730 / NBRC 12168 / NCIMB 10025 / NRRL B-2784 / 534).